A 763-amino-acid polypeptide reads, in one-letter code: Translation initiation factor IF-2, chloroplastic (763 aa).

Disordered regions lie at residues 1-22 (MFLNNQNFEKKTSSYSTNNNSS), 52-122 (IDKS…SNSA), and 149-168 (NNKIPQQKKQQVASSIDQSI). Residues 13 to 22 (SSYSTNNNSS) are compositionally biased toward low complexity. Over residues 73-92 (RIDKKNKNFNKAHDLLDNKK) the composition is skewed to basic and acidic residues. A compositionally biased stretch (basic residues) spans 93–104 (NKNRQRKKIKNK). Over residues 151-168 (KIPQQKKQQVASSIDQSI) the composition is skewed to polar residues. Residues 261 to 429 (NRPPVVTILG…ILLLAELENL (169 aa)) enclose the tr-type G domain. GTP is bound by residues 270-277 (GHVDHGKT), 316-320 (DTPGH), and 370-373 (SKID).

This sequence belongs to the TRAFAC class translation factor GTPase superfamily. Classic translation factor GTPase family. IF-2 subfamily.

The protein resides in the plastid. It localises to the chloroplast. In terms of biological role, one of the essential components for the initiation of protein synthesis. Protects formylmethionyl-tRNA from spontaneous hydrolysis and promotes its binding to the 30S ribosomal subunits. Also involved in the hydrolysis of GTP during the formation of the 70S ribosomal complex. The protein is Translation initiation factor IF-2, chloroplastic (infB) of Porphyra purpurea (Red seaweed).